Reading from the N-terminus, the 625-residue chain is Endo-1,4-beta-xylanase A (625 aa).

Positions 1-19 (MKLFQIFPLLLSLTSVTLA) are cleaved as a signal peptide. The GH11 1 domain maps to 35-231 (VSTGHDVKKI…TGGGCSGSVE (197 aa)). The interval 245–283 (DGKSKGGSSSGGSNGQGLGNGQGNGQGQGNGQGQSATGS) is disordered. Over residues 252 to 276 (SSSGGSNGQGLGNGQGNGQGQGNGQ) the composition is skewed to gly residues. Positions 255–279 (GGSNGQGLGNGQGNGQGQGNGQGQS) are linker. 2 consecutive repeat copies span residues 259 to 268 (GQGLGNGQGN) and 269 to 278 (GQGQGNGQGQ). The interval 259-278 (GQGLGNGQGNGQGQGNGQGQ) is 2 X 10 AA tandem repeats of G-Q-G-[LQ]-G-N-G-Q-G-[NQ]. 2 consecutive CBM10 domains span residues 285-324 (KCPSTITSQGYKCCSSNCDIIYRDQSGDWGVENDEWCGCG) and 332-371 (NCPSSIKNQGYKCCSDSCEIVLTDSDGDWGIENDEWCGCG). Residues 374–403 (NTTPTTTTKKSNNSQPTQGQSNNNSSTNTN) form a linker region. A disordered region spans residues 379–399 (TTTKKSNNSQPTQGQSNNNSS). In terms of domain architecture, GH11 2 spans 416 to 617 (TETSNKVGSI…GSGTSGTADF (202 aa)). Glutamate 510 serves as the catalytic Nucleophile. Glutamate 603 functions as the Proton donor in the catalytic mechanism.

This sequence belongs to the glycosyl hydrolase 11 (cellulase G) family.

The enzyme catalyses Endohydrolysis of (1-&gt;4)-beta-D-xylosidic linkages in xylans.. The protein operates within glycan degradation; xylan degradation. Its function is as follows. Hydrolyzes 1,4-beta linked polysaccharide backbones of xylans, one of the major hemicellulose components in hardwoods and softwoods. It is more active against xylopentaose than xylotetraose, has trace activity against xylotriose. The major products released from hydrolysis of xylooligosaccharides are xylobiose and xylotriose. The reiterated 40 AA domain is involved in binding the cellulase-hemicellulase complex. The chain is Endo-1,4-beta-xylanase A (XYNA) from Piromyces sp.